The chain runs to 23 residues: Glutamine synthetase (23 aa).

It belongs to the glutamine synthetase family. In terms of assembly, oligomer of 12 subunits arranged in the form of two hexagons. Mg(2+) serves as cofactor.

The protein localises to the cytoplasm. The catalysed reaction is L-glutamate + NH4(+) + ATP = L-glutamine + ADP + phosphate + H(+). Its activity is regulated as follows. The activity of this enzyme could be controlled by adenylation under conditions of abundant glutamine. In terms of biological role, involved in nitrogen metabolism via ammonium assimilation. Catalyzes the ATP-dependent biosynthesis of glutamine from glutamate and ammonia. This is Glutamine synthetase from Phormidium lapideum.